We begin with the raw amino-acid sequence, 115 residues long: Phosphoribosyl-ATP pyrophosphatase (115 aa).

It belongs to the PRA-PH family.

It is found in the cytoplasm. The catalysed reaction is 1-(5-phospho-beta-D-ribosyl)-ATP + H2O = 1-(5-phospho-beta-D-ribosyl)-5'-AMP + diphosphate + H(+). The protein operates within amino-acid biosynthesis; L-histidine biosynthesis; L-histidine from 5-phospho-alpha-D-ribose 1-diphosphate: step 2/9. The chain is Phosphoribosyl-ATP pyrophosphatase from Bordetella bronchiseptica (strain ATCC BAA-588 / NCTC 13252 / RB50) (Alcaligenes bronchisepticus).